A 138-amino-acid polypeptide reads, in one-letter code: Thyrotropin subunit beta (138 aa).

Positions Met1–Ser20 are cleaved as a signal peptide. 6 disulfides stabilise this stretch: Cys22–Cys72, Cys36–Cys87, Cys39–Cys125, Cys47–Cys103, Cys51–Cys105, and Cys108–Cys115. Asn43 carries N-linked (GlcNAc...) asparagine glycosylation. A propeptide spanning residues Met133 to Ile138 is cleaved from the precursor.

It belongs to the glycoprotein hormones subunit beta family. In terms of assembly, heterodimer of a common alpha chain and a unique beta chain which confers biological specificity to thyrotropin, lutropin, follitropin and gonadotropin.

It is found in the secreted. Indispensable for the control of thyroid structure and metabolism. This is Thyrotropin subunit beta (TSHB) from Bos taurus (Bovine).